The following is a 633-amino-acid chain: Glutamyl-tRNA(Gln) amidotransferase subunit E (633 aa).

The protein belongs to the GatB/GatE family. GatE subfamily. As to quaternary structure, heterodimer of GatD and GatE.

The catalysed reaction is L-glutamyl-tRNA(Gln) + L-glutamine + ATP + H2O = L-glutaminyl-tRNA(Gln) + L-glutamate + ADP + phosphate + H(+). In terms of biological role, allows the formation of correctly charged Gln-tRNA(Gln) through the transamidation of misacylated Glu-tRNA(Gln) in organisms which lack glutaminyl-tRNA synthetase. The reaction takes place in the presence of glutamine and ATP through an activated gamma-phospho-Glu-tRNA(Gln). The GatDE system is specific for glutamate and does not act on aspartate. In Methanococcus vannielii (strain ATCC 35089 / DSM 1224 / JCM 13029 / OCM 148 / SB), this protein is Glutamyl-tRNA(Gln) amidotransferase subunit E.